Reading from the N-terminus, the 615-residue chain is Vitamin B12 transporter BtuB (615 aa).

Residues 1 to 20 (MIKKVSLMTALSVTAFSGWA) form the signal peptide. The TonB box signature appears at 25–32 (DSLVVTAN). The region spanning 37–151 (PANTVLAPTS…IGGVVNIITT (115 aa)) is the TBDR plug domain. Cyanocob(III)alamin is bound by residues S84, N91, and 109–110 (VT). The 462-residue stretch at 154-615 (KDGTTLNAGV…EYTLSGSYTF (462 aa)) folds into the TBDR beta-barrel domain. 3 beta stranded membrane-spanning segments follow: residues 157-164 (TTLNAGVG), 168-177 (YQNYGGSTQQ), and 183-194 (TRVTLAGDYTYT). Residues D198, Q210, D212, and D214 each contribute to the Ca(2+) site. A run of 2 beta stranded transmembrane segments spans residues 216 to 226 (YMNKTIYGALE) and 231 to 247 (DQWS…NRTA). 2 residues coordinate Ca(2+): Y248 and D249. A250 is a cyanocob(III)alamin binding site. Residue D262 participates in Ca(2+) binding. Transmembrane regions (beta stranded) follow at residues 264-278 (RQLY…LRFN), 280-297 (GIFH…KDYN), 310-326 (TLDE…NSVD), 329-338 (HGNVGAGVDW), 354-370 (TNLR…QKFG), 372-382 (FTLEGAARSDD), 386-401 (FGRH…WEFI), 404-418 (YRFI…KAPN), 435-444 (ESKQWEGAFE), 450-459 (VSWRVSAYRN), 474-491 (YYNV…TASF), 495-510 (PLTH…ARNA), 518-530 (RRAK…QLDT), 536-551 (DWSL…YDTD), 559-573 (KVKM…LAVS), 586-597 (IANLFDKDYETV), and 603-615 (AGRE…SYTF). A cyanocob(III)alamin-binding site is contributed by T310. R518 provides a ligand contact to cyanocob(III)alamin. The TonB C-terminal box motif lies at 598–615 (YGYETAGREYTLSGSYTF).

Belongs to the TonB-dependent receptor family. BtuB (TC 1.B.14.3.1) subfamily.

The protein localises to the cell outer membrane. Functionally, involved in the active translocation of vitamin B12 (cyanocobalamin) across the outer membrane to the periplasmic space. It derives its energy for transport by interacting with the trans-periplasmic membrane protein TonB. In Enterobacter sp. (strain 638), this protein is Vitamin B12 transporter BtuB.